A 157-amino-acid chain; its full sequence is Small ribosomal subunit protein bS6 (157 aa).

The span at 96–151 (HEEGPSAMMRKADRDRDRDERGGGGFRGDREGGFRGDREGGGFRGDRGPRRPRDDA) shows a compositional bias: basic and acidic residues. Residues 96–157 (HEEGPSAMMR…RDDAPAATEE (62 aa)) form a disordered region.

Belongs to the bacterial ribosomal protein bS6 family.

Functionally, binds together with bS18 to 16S ribosomal RNA. The polypeptide is Small ribosomal subunit protein bS6 (Rhodopseudomonas palustris (strain BisA53)).